We begin with the raw amino-acid sequence, 34 residues long: Photosystem I reaction center subunit XII (34 aa).

Residues 10-32 (IFIALVVAAHAGVLAVRLCVSLY) form a helical membrane-spanning segment.

This sequence belongs to the PsaM family.

The protein localises to the cellular thylakoid membrane. The protein is Photosystem I reaction center subunit XII of Synechococcus sp. (strain WH7803).